Here is a 340-residue protein sequence, read N- to C-terminus: Guanine nucleotide-binding protein G(I)/G(S)/G(T) subunit beta-1 (340 aa).

Ser-2 bears the N-acetylserine mark. Ser-2 is subject to Phosphoserine. WD repeat units lie at residues Arg-46–Pro-94, Leu-95–Ala-140, Gly-141–Thr-181, Gly-182–Thr-223, Gly-224–Asp-267, Asn-268–Ala-309, and Gly-310–Asn-340. At His-266 the chain carries Phosphohistidine.

It belongs to the WD repeat G protein beta family. G proteins are composed of 3 units, alpha, beta and gamma. The heterodimer formed by GNB1 and GNG2 interacts with ARHGEF5. The heterodimer formed by GNB1 and GNG2 interacts with GRK2. Forms a complex with GNAO1 and GNG3. Interacts with ARHGEF18 and RASD2. Forms complexes with TAS2R14 and G-proteins; these complexes play a role in the perception of bitterness. Component of the TAS2R14-GNAI1 complex, consisting of TAS2R14, GNAI1, GNB1 and GNG2. Component of the TAS2R14-GNAT3 complex, consisting of TAS2R14, GNAT3, GNB1 and GNG2. Component of the TAS2R14-GNAS2 complex, consisting of TAS2R14, GNAS2, GNB1 and GNG2. Phosphorylation at His-266 by NDKB contributes to G protein activation by increasing the high energetic phosphate transfer onto GDP.

Functionally, guanine nucleotide-binding proteins (G proteins) are involved as a modulator or transducer in various transmembrane signaling systems. The beta and gamma chains are required for the GTPase activity, for replacement of GDP by GTP, and for G protein-effector interaction. The chain is Guanine nucleotide-binding protein G(I)/G(S)/G(T) subunit beta-1 (GNB1) from Bos taurus (Bovine).